The following is a 593-amino-acid chain: MALAISHEDTQILLKDKNILQESVLNKYRTAGQIAQTALKYVTSLINDSYHSKTTQRQLTVPELCLLTDSFILTRLEQYYKNKVNERGIAIPTTIDIDQISGGWCPEIDDTQNLLNWNKGKDSTFASSVTGTLRPGDLVKITLGVHIDGYTSEVSHTMVIYPVDETKPILQPTGPLLGGKADAVAAAHIAMETVVALLACALTPEKLPASLGGTSSGITGQLIRTIVDTIARSYNCGVVPGSRVRRIRRFLAGQNEGIVAEREYKGVVWTESHQEADLLSNTDAKDLTVVDRGQSTPFTNVSAIPSDDFVVQSGEVYLIDLKMASLEHCTKKGLVTLETVDSYTGKSHKAGELIARPGAYVRDFAQTHILKLKTSRQLLTKIDKQGVYPFKLSHLSSNFPFVHENEEELQSLKKDLKSFRLGMSEISNNYLCVESPIQIARWVPWDHILKATNPNGNLSYDATSTLTLPGHELPLPKLGVSAIKLKSLMNSTKESISLPVARECNTIVLCDSSVSTTDRPELLRLTGGSKTCQPSWIHSQHELNPQDSIVQGIFQLATLAKDKRFGLLLKETQPMKQKSVETSNGGVEETMKM.

The protein belongs to the peptidase M24 family. In terms of assembly, component of the nucleoplasmic and cytoplasmic pre-60S ribosomal particles. Interacts directly with REI1.

Its subcellular location is the cytoplasm. The protein localises to the nucleus. In terms of biological role, probable metalloprotease involved in proper assembly of pre-ribosomal particles during the biogenesis of the 60S ribosomal subunit. Accompanies the pre-60S particles to the cytoplasm. The chain is Probable metalloprotease ARX1 (ARX1) from Saccharomyces cerevisiae (strain ATCC 204508 / S288c) (Baker's yeast).